The chain runs to 642 residues: Threonine--tRNA ligase (642 aa).

The region spanning 1-61 is the TGS domain; it reads MPVITLPDGS…ENDATLAIIT (61 aa). The interval 243–534 is catalytic; the sequence is DHRKIGKQLD…LTEEFAGFFP (292 aa). Positions 334, 385, and 511 each coordinate Zn(2+).

The protein belongs to the class-II aminoacyl-tRNA synthetase family. As to quaternary structure, homodimer. Zn(2+) serves as cofactor.

It is found in the cytoplasm. The enzyme catalyses tRNA(Thr) + L-threonine + ATP = L-threonyl-tRNA(Thr) + AMP + diphosphate + H(+). In terms of biological role, catalyzes the attachment of threonine to tRNA(Thr) in a two-step reaction: L-threonine is first activated by ATP to form Thr-AMP and then transferred to the acceptor end of tRNA(Thr). Also edits incorrectly charged L-seryl-tRNA(Thr). The sequence is that of Threonine--tRNA ligase from Salmonella gallinarum (strain 287/91 / NCTC 13346).